The sequence spans 630 residues: MSTFKNALPASNDILTRDPLPASHKTYISGEIHPEIKVPMRAITLTNGETVTVYDTSGPYTDPNIEIDVAQGIPTVRKDWIANRNDVEAYEGRIIDPKDNGYKNRTQMETAIAGASSLMRQPLRAKAGQNVTQLHYARQGIITPEMEFIAIRENQRRDMTRRYLNDPEREARLKGENFGANLLEDITPEFVRKEVAEGRAVIPANINHPESEPMIIGRNFLVKVNANIGNSATTSSIGEEVEKMVWATRWGADTVMDLSTGQNIHTTRDWILRNAPVPIGTVPIYQALEKVNGVAEDLTWEIFRDTLIEQAEQGVDYFTIHAGVLLRYVPMTAKRVTGIVSRGGSIMAKWCIAHHKENFLYTHFEDICEILKQYDVSFSLGDGLRPGSVADANDEAQISELKTLGELTQIAWKHDVQVIIEGPGHVPMHMIKENMDKQLEYCHEAPFYTLGPLTTDIAPGYDHITSGIGAAMIGWFGTAMLCYVTPKEHLGLPNRDDVKEGLITYKLAAHAADIAKGHPGARSRDDALSQARFEFRWEDQFNLGLDPEKARAFHDETLPRDSAKVAHFCSMCGPKFCSMKISQEVRDYADKQGLSTEDAVNKGMEEMSQTFKNQGSEVYVNVEDITKTGS.

Substrate is bound by residues asparagine 227, methionine 256, tyrosine 285, histidine 321, serine 341–glycine 343, aspartate 382–arginine 385, and glutamate 421. Histidine 425 contacts Zn(2+). Tyrosine 448 is a binding site for substrate. Histidine 489 serves as a coordination point for Zn(2+). The [4Fe-4S] cluster site is built by cysteine 569, cysteine 572, and cysteine 577.

The protein belongs to the ThiC family. In terms of assembly, homodimer. It depends on [4Fe-4S] cluster as a cofactor.

It catalyses the reaction 5-amino-1-(5-phospho-beta-D-ribosyl)imidazole + S-adenosyl-L-methionine = 4-amino-2-methyl-5-(phosphooxymethyl)pyrimidine + CO + 5'-deoxyadenosine + formate + L-methionine + 3 H(+). It participates in cofactor biosynthesis; thiamine diphosphate biosynthesis. Its function is as follows. Catalyzes the synthesis of the hydroxymethylpyrimidine phosphate (HMP-P) moiety of thiamine from aminoimidazole ribotide (AIR) in a radical S-adenosyl-L-methionine (SAM)-dependent reaction. The sequence is that of Phosphomethylpyrimidine synthase from Hydrogenovibrio crunogenus (strain DSM 25203 / XCL-2) (Thiomicrospira crunogena).